The chain runs to 78 residues: MRLILWLPVLVVVLLMVLEGPAPAQGAPDIAGTFRNIPNSLKEFGNNLKDAFESIPEATRKLMTSFAEGLKNFRIPMV.

Positions 1-26 (MRLILWLPVLVVVLLMVLEGPAPAQG) are cleaved as a signal peptide.

This sequence belongs to the apolipoprotein C1 family.

The protein localises to the secreted. Inhibitor of lipoprotein binding to the low density lipoprotein (LDL) receptor, LDL receptor-related protein, and very low density lipoprotein (VLDL) receptor. Associates with high density lipoproteins (HDL) and the triacylglycerol-rich lipoproteins in the plasma and makes up about 10% of the protein of the VLDL and 2% of that of HDL. Appears to interfere directly with fatty acid uptake and is also the major plasma inhibitor of cholesteryl ester transfer protein (CETP). Binds free fatty acids and reduces their intracellular esterification. Modulates the interaction of APOE with beta-migrating VLDL and inhibits binding of beta-VLDL to the LDL receptor-related protein. The chain is Apolipoprotein C-I (APOC1) from Puma concolor (Mountain lion).